Consider the following 30-residue polypeptide: Mejucin (30 aa).

The protein resides in the secreted. Bacteriocin that inhibits the growth of several Gram-positive bacteria, especially the food-borne pathogens L.monocytogenes, B.cereus strain ATCC 11778, B.cereus strain ATCC 21366, B.cereus strain ATCC 10876 and B.cereus strain ATCC 14579. Likely to act by disrupting the pathogen membrane resulting in leakage of intracellular constituents. Does not inhibit the growth of Gram-negative bacteria. This chain is Mejucin, found in Bacillus subtilis.